The chain runs to 451 residues: MEQWDHFHNQQEDTDSCSESVKFDARSMTALLPPNPKNSPSLQEKLKSFKAALIALYLLVFAVLIPLIGIVAAQLLKWETKNCSVSSTNANDITQSLTGKGNDSEEEMRFQEVFMEHMSNMEKRIQHILDMEANLMDTEHFQNFSMTTDQRFNDILLQLSTLFSSVQGHGNAIDEISKSLISLNTTLLDLQLNIENLNGKIQENTFKQQEEISKLEERVYNVSAEIMAMKEEQVHLEQEIKGEVKVLNNITNDLRLKDWEHSQTLRNITLIQGPPGPPGEKGDRGPTGESGPRGFPGPIGPPGLKGDRGAIGFPGSRGLPGYAGRPGNSGPKGQKGEKGSGNTLTPFTKVRLVGGSGPHEGRVEILHSGQWGTICDDRWEVRVGQVVCRSLGYPGVQAVHKAAHFGQGTGPIWLNEVFCFGRESSIEECKIRQWGTRACSHSEDAGVTCTL.

At 1–50 (MEQWDHFHNQQEDTDSCSESVKFDARSMTALLPPNPKNSPSLQEKLKSFK) the chain is on the cytoplasmic side. Residue Ser-27 is modified to Phosphoserine. Residues 51-76 (AALIALYLLVFAVLIPLIGIVAAQLL) form a helical; Signal-anchor for type II membrane protein membrane-spanning segment. The spacer stretch occupies residues 77–109 (KWETKNCSVSSTNANDITQSLTGKGNDSEEEMR). Residues 77–451 (KWETKNCSVS…SEDAGVTCTL (375 aa)) are Extracellular-facing. N-linked (GlcNAc...) asparagine glycans are attached at residues Asn-82, Asn-102, Asn-143, Asn-184, Asn-221, Asn-249, and Asn-267. Residues 171–255 (NAIDEISKSL…VLNNITNDLR (85 aa)) adopt a coiled-coil conformation. The tract at residues 267 to 346 (NITLIQGPPG…EKGSGNTLTP (80 aa)) is disordered. A Collagen-like domain is found at 273–341 (GPPGPPGEKG…KGQKGEKGSG (69 aa)). The region spanning 350–450 (VRLVGGSGPH…HSEDAGVTCT (101 aa)) is the SRCR domain. 3 cysteine pairs are disulfide-bonded: Cys-375-Cys-439, Cys-388-Cys-449, and Cys-419-Cys-429.

Homotrimer. Interacts with MYO18A. Isoform I, isoform II and isoform III are expressed in monocyte-derived macrophages. Isoform I and isoform II are expressed in the liver, placenta and brain.

It localises to the membrane. In terms of biological role, membrane glycoproteins implicated in the pathologic deposition of cholesterol in arterial walls during atherogenesis. Two types of receptor subunits exist. These receptors mediate the endocytosis of a diverse group of macromolecules, including modified low density lipoproteins (LDL). Isoform III does not internalize acetylated LDL. The protein is Macrophage scavenger receptor types I and II (MSR1) of Homo sapiens (Human).